The sequence spans 99 residues: Acylphosphatase-2 (99 aa).

S2 carries the post-translational modification N-acetylserine. An Acylphosphatase-like domain is found at 9–99 (SVDYEVFGRV…LEYSNFSIRY (91 aa)). Active-site residues include R24 and N42. S93 is subject to Phosphoserine.

This sequence belongs to the acylphosphatase family.

The enzyme catalyses an acyl phosphate + H2O = a carboxylate + phosphate + H(+). In terms of biological role, its physiological role is not yet clear. This is Acylphosphatase-2 (ACYP2) from Cavia porcellus (Guinea pig).